The sequence spans 53 residues: HOXB-AS3 peptide (53 aa).

Positions 1 to 53 (MPVLPGTQRYPHQRRRFQAAGGGAESGKRGSEEAPGVAWSGSESGRDAATPAW) are disordered.

In terms of assembly, interacts with HNRNPA1 (via the RGG-box). Interacts with IGF2BP2.

In terms of biological role, blocks the binding of HNRNPA1 to the intronic sequences flanking exon 9 of the PKM gene by competitively binding to the HNRNPA1 RGG-box motif. This inhibits inclusion of exon 9 and promotes inclusion of exon 10, suppressing formation of the PKM M2 isoform and promoting production of the M1 isoform. Also suppresses HNRNPA1-mediated processing of microRNA 18a (miR-18a). Promotes MYC stability through interaction with IGF2BP2. This is HOXB-AS3 peptide from Homo sapiens (Human).